The following is a 332-amino-acid chain: Ribosomal RNA small subunit methyltransferase H (332 aa).

S-adenosyl-L-methionine contacts are provided by residues 39 to 41, D56, F83, D100, and Q107; that span reads GGY.

This sequence belongs to the methyltransferase superfamily. RsmH family.

It is found in the cytoplasm. The catalysed reaction is cytidine(1402) in 16S rRNA + S-adenosyl-L-methionine = N(4)-methylcytidine(1402) in 16S rRNA + S-adenosyl-L-homocysteine + H(+). In terms of biological role, specifically methylates the N4 position of cytidine in position 1402 (C1402) of 16S rRNA. In Bartonella grahamii (strain as4aup), this protein is Ribosomal RNA small subunit methyltransferase H.